Reading from the N-terminus, the 215-residue chain is MEEGKRWIAVPTWRVPGRMERWHSLIKYLKYRTGDLEKVCYVPHHKVGWAWWTCSRVIFPLKGESHLEIQAYWNLTPEKGWLSSYSVRLTWYTEKFWTDVTPDCADSLIHSTYFSCFTAGEVRRAIRGEKLLSCCNYPQAHKYQVPSLQFLALVVVQQNGRPQRDNTTRKQWRRNYRRGLRVARQDGRSHKQRGSEPPAPRAYFPGVAKVLEILA.

At T98 the chain carries Phosphothreonine; by host MAP4K1. The HCCH motif signature appears at 110 to 141 (HSTYFSCFTAGEVRRAIRGEKLLSCCNYPQAH). Position 147 is a phosphoserine; by host (S147). The short motif at 147-156 (SLQFLALVVV) is the BC-box-like motif element. Residues 154–167 (VVVQQNGRPQRDNT) form a multimerization region.

Belongs to the primate lentivirus group Vif protein family. Homomultimer; in vitro and presumably in vivo. Interacts with viral Pr55Gag precursor and human APOBEC3G. The interaction between Vif and APOBEC3G is species-specific, which may play a role in restricting the replication of HIV to humans. Forms an E3 ligase complex by interacting with human CUL5 and elongin BC complex (ELOB and ELOC). Processed in virion by the viral protease. Post-translationally, highly phosphorylated on serine and threonine residues. In terms of processing, polyubiquitinated and degraded by the proteasome in the presence of APOBEC3G.

The protein resides in the host cytoplasm. It is found in the host cell membrane. Its subcellular location is the virion. Counteracts the innate antiviral activity of APOBEC3G. Forms a complex with host APOBEC3G thus preventing the entry of this lethally hypermutating enzyme into progeny virions. Functions as an adapter molecule, recruiting APOBEC3G to the ubiquitin-proteasome machinery. Targets APOBEC3G for degradation through the assembly with elongin BC complex, CUL5 and RBX1. Binds viral RNA and affects the stability of viral nucleoprotein core. May play a role in viral morphology. The chain is Virion infectivity factor (vif) from Homo sapiens (Human).